We begin with the raw amino-acid sequence, 223 residues long: Na(+)-translocating NADH-quinone reductase subunit D (223 aa).

Transmembrane regions (helical) follow at residues 42–62 (TVMA…ISMI), 66–86 (IPSS…VIVV), 103–123 (VFVG…AFAM), 131–151 (FFDG…LGFI), and 178–198 (NGLL…IWAL).

It belongs to the NqrDE/RnfAE family. As to quaternary structure, composed of six subunits; NqrA, NqrB, NqrC, NqrD, NqrE and NqrF.

The protein localises to the cell inner membrane. It catalyses the reaction a ubiquinone + n Na(+)(in) + NADH + H(+) = a ubiquinol + n Na(+)(out) + NAD(+). Its function is as follows. NQR complex catalyzes the reduction of ubiquinone-1 to ubiquinol by two successive reactions, coupled with the transport of Na(+) ions from the cytoplasm to the periplasm. NqrA to NqrE are probably involved in the second step, the conversion of ubisemiquinone to ubiquinol. The polypeptide is Na(+)-translocating NADH-quinone reductase subunit D (Pseudomonas paraeruginosa (strain DSM 24068 / PA7) (Pseudomonas aeruginosa (strain PA7))).